We begin with the raw amino-acid sequence, 45 residues long: Amphipathic peptide Hj0164 (45 aa).

Residues 1–23 (MKSQAFFLLFLVVLLLATTQSEA) form the signal peptide. Phenylalanine 33 carries the phenylalanine amide modification. The propeptide occupies 37–45 (SLRDVDTMK).

The protein belongs to the non-disulfide-bridged peptide (NDBP) superfamily. Short antimicrobial peptide (group 4) family. As to expression, expressed by the venom gland.

It localises to the secreted. Its subcellular location is the target cell membrane. In terms of biological role, amphipathic peptide that shows antibacterial activities. The protein is Amphipathic peptide Hj0164 of Hottentotta judaicus (Black scorpion).